The sequence spans 320 residues: ATP-dependent 6-phosphofructokinase (320 aa).

Residue G12 coordinates ATP. ADP is bound at residue 22–26; sequence RGVVR. Residues 73 to 74 and 103 to 106 each bind ATP; these read RF and GDGS. Residue D104 participates in Mg(2+) binding. Residue 126–128 coordinates substrate; that stretch reads TID. The active-site Proton acceptor is the D128. R155 serves as a coordination point for ADP. Residues R163 and 170 to 172 each bind substrate; that span reads MGR. ADP is bound by residues 186–188, K212, and 214–216; these read GCE and KKH. Residues E223, R244, and 250–253 each bind substrate; that span reads HIQR.

The protein belongs to the phosphofructokinase type A (PFKA) family. ATP-dependent PFK group I subfamily. Prokaryotic clade 'B1' sub-subfamily. Homotetramer. Mg(2+) is required as a cofactor.

It localises to the cytoplasm. The enzyme catalyses beta-D-fructose 6-phosphate + ATP = beta-D-fructose 1,6-bisphosphate + ADP + H(+). The protein operates within carbohydrate degradation; glycolysis; D-glyceraldehyde 3-phosphate and glycerone phosphate from D-glucose: step 3/4. With respect to regulation, allosterically activated by ADP and other diphosphonucleosides, and allosterically inhibited by phosphoenolpyruvate. In terms of biological role, catalyzes the phosphorylation of D-fructose 6-phosphate to fructose 1,6-bisphosphate by ATP, the first committing step of glycolysis. In Photobacterium profundum (strain SS9), this protein is ATP-dependent 6-phosphofructokinase.